The chain runs to 794 residues: Copper-exporting P-type ATPase (794 aa).

HMA domains lie at 5–70 (KKTT…YGVL) and 72–138 (ETAE…YDAQ). Positions 16, 19, 83, and 86 each coordinate Cu(+). The next 6 membrane-spanning stretches (helical) occupy residues 162-182 (IISA…LFGI), 187-207 (IFMN…IIGW), 224-244 (MDVL…YEMV), 250-270 (ANVM…LILF), 411-431 (YFVP…IAFV), and 438-458 (PALV…LGLA). Catalysis depends on D495, which acts as the 4-aspartylphosphate intermediate. Positions 689 and 693 each coordinate Mg(2+). The next 2 membrane-spanning stretches (helical) occupy residues 747–766 (LFWA…LGLL) and 770–789 (IAGA…ALRL).

It belongs to the cation transport ATPase (P-type) (TC 3.A.3) family. Type IB subfamily.

It localises to the cell membrane. It catalyses the reaction Cu(+)(in) + ATP + H2O = Cu(+)(out) + ADP + phosphate + H(+). In terms of biological role, involved in copper export. In Staphylococcus saprophyticus subsp. saprophyticus (strain ATCC 15305 / DSM 20229 / NCIMB 8711 / NCTC 7292 / S-41), this protein is Copper-exporting P-type ATPase (copA).